The sequence spans 184 residues: Cytidylate kinase (184 aa).

ATP is bound at residue 8–16; the sequence is GQPGSGKTT.

This sequence belongs to the cytidylate kinase family. Type 2 subfamily.

Its subcellular location is the cytoplasm. The enzyme catalyses CMP + ATP = CDP + ADP. The catalysed reaction is dCMP + ATP = dCDP + ADP. The protein is Cytidylate kinase of Pyrobaculum aerophilum (strain ATCC 51768 / DSM 7523 / JCM 9630 / CIP 104966 / NBRC 100827 / IM2).